The following is a 195-amino-acid chain: Probable GTP-binding protein EngB (195 aa).

The 172-residue stretch at 24 to 195 (ELPEIALAGR…EAWDAILEKL (172 aa)) folds into the EngB-type G domain. GTP contacts are provided by residues 32 to 39 (GRSNVGKS), 59 to 63 (GKTQL), 77 to 80 (DVPG), 144 to 147 (TKAD), and 176 to 178 (FSS). Positions 39 and 61 each coordinate Mg(2+).

This sequence belongs to the TRAFAC class TrmE-Era-EngA-EngB-Septin-like GTPase superfamily. EngB GTPase family. Requires Mg(2+) as cofactor.

Its function is as follows. Necessary for normal cell division and for the maintenance of normal septation. The chain is Probable GTP-binding protein EngB from Streptococcus pneumoniae (strain P1031).